The primary structure comprises 296 residues: 4-hydroxybenzoate octaprenyltransferase (296 aa).

8 helical membrane passes run 28–48 (PIGI…AGKG), 52–72 (LKTV…GCVI), 102–122 (ALAL…FTNA), 146–166 (YYPQ…AFTA), 169–189 (GDLP…TVGY), 219–239 (VIIL…GARF), 241–261 (LGAC…WEFW), and 275–295 (FLHN…DYAV).

It belongs to the UbiA prenyltransferase family. The cofactor is Mg(2+).

The protein localises to the cell inner membrane. The enzyme catalyses all-trans-octaprenyl diphosphate + 4-hydroxybenzoate = 4-hydroxy-3-(all-trans-octaprenyl)benzoate + diphosphate. The protein operates within cofactor biosynthesis; ubiquinone biosynthesis. Its function is as follows. Catalyzes the prenylation of para-hydroxybenzoate (PHB) with an all-trans polyprenyl group. Mediates the second step in the final reaction sequence of ubiquinone-8 (UQ-8) biosynthesis, which is the condensation of the polyisoprenoid side chain with PHB, generating the first membrane-bound Q intermediate 3-octaprenyl-4-hydroxybenzoate. The polypeptide is 4-hydroxybenzoate octaprenyltransferase (Pseudomonas savastanoi pv. phaseolicola (strain 1448A / Race 6) (Pseudomonas syringae pv. phaseolicola (strain 1448A / Race 6))).